A 275-amino-acid polypeptide reads, in one-letter code: Dermonecrotic toxin SpaSicTox-betaIIA1 (275 aa).

His-5 is an active-site residue. The Mg(2+) site is built by Glu-25 and Asp-27. His-41 (nucleophile) is an active-site residue. 2 disulfides stabilise this stretch: Cys-45–Cys-51 and Cys-47–Cys-190. Asp-85 lines the Mg(2+) pocket.

Belongs to the arthropod phospholipase D family. Class II subfamily. The cofactor is Mg(2+). Expressed by the venom gland.

It localises to the secreted. It carries out the reaction an N-(acyl)-sphingosylphosphocholine = an N-(acyl)-sphingosyl-1,3-cyclic phosphate + choline. It catalyses the reaction an N-(acyl)-sphingosylphosphoethanolamine = an N-(acyl)-sphingosyl-1,3-cyclic phosphate + ethanolamine. The catalysed reaction is a 1-acyl-sn-glycero-3-phosphocholine = a 1-acyl-sn-glycero-2,3-cyclic phosphate + choline. The enzyme catalyses a 1-acyl-sn-glycero-3-phosphoethanolamine = a 1-acyl-sn-glycero-2,3-cyclic phosphate + ethanolamine. Dermonecrotic toxins cleave the phosphodiester linkage between the phosphate and headgroup of certain phospholipids (sphingolipid and lysolipid substrates), forming an alcohol (often choline) and a cyclic phosphate. This toxin acts on sphingomyelin (SM). It may also act on ceramide phosphoethanolamine (CPE), lysophosphatidylcholine (LPC) and lysophosphatidylethanolamine (LPE), but not on lysophosphatidylserine (LPS), and lysophosphatidylglycerol (LPG). It acts by transphosphatidylation, releasing exclusively cyclic phosphate products as second products. Induces dermonecrosis, hemolysis, increased vascular permeability, edema, inflammatory response, and platelet aggregation. The protein is Dermonecrotic toxin SpaSicTox-betaIIA1 of Sicarius patagonicus (Six-eyed sand spider).